We begin with the raw amino-acid sequence, 384 residues long: Bifunctional enzyme IspD/IspF (384 aa).

2-C-methyl-D-erythritol 4-phosphate cytidylyltransferase regions lie at residues 1–227 and 1–228; these read MAKV…EGEQ and MAKV…GEQR. The tract at residues 228–384 is 2-C-methyl-D-erythritol 2,4-cyclodiphosphate synthase; it reads RIGSGFDVHR…QATALITLPF (157 aa). Positions 234 and 236 each coordinate a divalent metal cation. Residues 234–236 and 260–261 contribute to the 4-CDP-2-C-methyl-D-erythritol 2-phosphate site; these read DVH and HS. H268 lines the a divalent metal cation pocket. Residues 282–284, 358–361, F365, and R368 each bind 4-CDP-2-C-methyl-D-erythritol 2-phosphate; these read DIG and TTTE.

The protein in the N-terminal section; belongs to the IspD/TarI cytidylyltransferase family. IspD subfamily. This sequence in the C-terminal section; belongs to the IspF family. A divalent metal cation serves as cofactor.

It catalyses the reaction 2-C-methyl-D-erythritol 4-phosphate + CTP + H(+) = 4-CDP-2-C-methyl-D-erythritol + diphosphate. The catalysed reaction is 4-CDP-2-C-methyl-D-erythritol 2-phosphate = 2-C-methyl-D-erythritol 2,4-cyclic diphosphate + CMP. The protein operates within isoprenoid biosynthesis; isopentenyl diphosphate biosynthesis via DXP pathway; isopentenyl diphosphate from 1-deoxy-D-xylulose 5-phosphate: step 2/6. Its pathway is isoprenoid biosynthesis; isopentenyl diphosphate biosynthesis via DXP pathway; isopentenyl diphosphate from 1-deoxy-D-xylulose 5-phosphate: step 4/6. Functionally, bifunctional enzyme that catalyzes the formation of 4-diphosphocytidyl-2-C-methyl-D-erythritol from CTP and 2-C-methyl-D-erythritol 4-phosphate (MEP) (IspD), and catalyzes the conversion of 4-diphosphocytidyl-2-C-methyl-D-erythritol 2-phosphate (CDP-ME2P) to 2-C-methyl-D-erythritol 2,4-cyclodiphosphate (ME-CPP) with a corresponding release of cytidine 5-monophosphate (CMP) (IspF). This is Bifunctional enzyme IspD/IspF from Rhodospirillum rubrum (strain ATCC 11170 / ATH 1.1.1 / DSM 467 / LMG 4362 / NCIMB 8255 / S1).